The primary structure comprises 431 residues: Forkhead box protein N2 (431 aa).

A DNA-binding region (fork-head) is located at residues K112–S208. The interval D364 to K387 is disordered.

It is found in the nucleus. In terms of biological role, binds to the purine-rich region in HTLV-I LTR. This Homo sapiens (Human) protein is Forkhead box protein N2 (FOXN2).